A 249-amino-acid polypeptide reads, in one-letter code: Leucyl/phenylalanyl-tRNA--protein transferase (249 aa).

The tract at residues 1–21 (MSRTLPHLLSSDPASPFPPAE) is disordered.

This sequence belongs to the L/F-transferase family.

It localises to the cytoplasm. The enzyme catalyses N-terminal L-lysyl-[protein] + L-leucyl-tRNA(Leu) = N-terminal L-leucyl-L-lysyl-[protein] + tRNA(Leu) + H(+). The catalysed reaction is N-terminal L-arginyl-[protein] + L-leucyl-tRNA(Leu) = N-terminal L-leucyl-L-arginyl-[protein] + tRNA(Leu) + H(+). It catalyses the reaction L-phenylalanyl-tRNA(Phe) + an N-terminal L-alpha-aminoacyl-[protein] = an N-terminal L-phenylalanyl-L-alpha-aminoacyl-[protein] + tRNA(Phe). Functionally, functions in the N-end rule pathway of protein degradation where it conjugates Leu, Phe and, less efficiently, Met from aminoacyl-tRNAs to the N-termini of proteins containing an N-terminal arginine or lysine. The polypeptide is Leucyl/phenylalanyl-tRNA--protein transferase (Xanthomonas campestris pv. campestris (strain 8004)).